A 592-amino-acid chain; its full sequence is Arginine--tRNA ligase (592 aa).

The 'HIGH' region motif lies at 112–122 (VNPNKELHVGH).

This sequence belongs to the class-I aminoacyl-tRNA synthetase family. Monomer.

The protein resides in the cytoplasm. It catalyses the reaction tRNA(Arg) + L-arginine + ATP = L-arginyl-tRNA(Arg) + AMP + diphosphate. This is Arginine--tRNA ligase from Thermus thermophilus (strain ATCC 27634 / DSM 579 / HB8).